Here is a 304-residue protein sequence, read N- to C-terminus: Homoserine kinase (304 aa).

90 to 100 (PLARGLGSSAS) contacts ATP.

Belongs to the GHMP kinase family. Homoserine kinase subfamily.

It is found in the cytoplasm. It catalyses the reaction L-homoserine + ATP = O-phospho-L-homoserine + ADP + H(+). Its pathway is amino-acid biosynthesis; L-threonine biosynthesis; L-threonine from L-aspartate: step 4/5. Its function is as follows. Catalyzes the ATP-dependent phosphorylation of L-homoserine to L-homoserine phosphate. This chain is Homoserine kinase, found in Staphylococcus aureus (strain JH9).